The sequence spans 491 residues: Lysine--tRNA ligase (491 aa).

Residues Glu399 and Glu406 each contribute to the Mg(2+) site.

This sequence belongs to the class-II aminoacyl-tRNA synthetase family. Homodimer. Mg(2+) is required as a cofactor.

The protein resides in the cytoplasm. It catalyses the reaction tRNA(Lys) + L-lysine + ATP = L-lysyl-tRNA(Lys) + AMP + diphosphate. The chain is Lysine--tRNA ligase from Chloroflexus aurantiacus (strain ATCC 29366 / DSM 635 / J-10-fl).